The sequence spans 247 residues: Peroxisomal membrane protein 11A (247 aa).

The Cytoplasmic portion of the chain corresponds to 1-83 (MDAFTRFTNQ…SIHATDLVPR (83 aa)). The chain crosses the membrane as a helical span at residues 84–105 (LCLTLANLNRVIYFICDTILWV). Over 106–219 (RSVGLTSGIN…DQLGIYKSNP (114 aa)) the chain is Lumenal. A helical membrane pass occupies residues 220–239 (GIIGLGGLVSSIAGMITVAY). The segment at 220–239 (GIIGLGGLVSSIAGMITVAY) is required for homodimerization, interaction with PEX11G, and peroxisomal localization. The Cytoplasmic segment spans residues 240 to 247 (PQMKLKTR).

This sequence belongs to the peroxin-11 family. Homodimer. Heterodimer with PEX11G. Probably interacts with COPB2 and COPA. Interacts with PEX19. Interacts with FIS1. Post-translationally, seems not to be N-glycosylated.

The protein localises to the peroxisome membrane. Functionally, may be involved in peroxisomal proliferation and may regulate peroxisomes division. May mediate binding of coatomer proteins to the peroxisomal membrane. Promotes membrane protrusion and elongation on the peroxisomal surface. This is Peroxisomal membrane protein 11A (PEX11A) from Homo sapiens (Human).